The primary structure comprises 98 residues: Cytochrome b (98 aa).

3 consecutive transmembrane segments (helical) span residues 1–18 (LLGL…FLAM), 42–63 (WLIR…YLHV), and 78–98 (WNIG…GYVL). Residues H48 and H62 each coordinate heme b.

This sequence belongs to the cytochrome b family. As to quaternary structure, the cytochrome bc1 complex contains 3 respiratory subunits (MT-CYB, CYC1 and UQCRFS1), 2 core proteins (UQCRC1 and UQCRC2) and probably 6 low-molecular weight proteins. It depends on heme b as a cofactor.

It localises to the mitochondrion inner membrane. Component of the ubiquinol-cytochrome c reductase complex (complex III or cytochrome b-c1 complex) that is part of the mitochondrial respiratory chain. The b-c1 complex mediates electron transfer from ubiquinol to cytochrome c. Contributes to the generation of a proton gradient across the mitochondrial membrane that is then used for ATP synthesis. The polypeptide is Cytochrome b (mt-cyb) (Scaphirhynchus platorynchus (Shovelnose sturgeon)).